We begin with the raw amino-acid sequence, 185 residues long: Putative tyrosine-protein phosphatase OCA1 (185 aa).

The Tyrosine-protein phosphatase domain occupies 18–178 (NFCPVEKQLY…TVEIGSGKGS (161 aa)). Cys116 (phosphocysteine intermediate) is an active-site residue.

This sequence belongs to the protein-tyrosine phosphatase family.

Its subcellular location is the cytoplasm. It catalyses the reaction O-phospho-L-tyrosyl-[protein] + H2O = L-tyrosyl-[protein] + phosphate. Its function is as follows. Putative tyrosine-protein phosphatase required for protection against superoxide stress. This is Putative tyrosine-protein phosphatase OCA1 (OCA1) from Meyerozyma guilliermondii (strain ATCC 6260 / CBS 566 / DSM 6381 / JCM 1539 / NBRC 10279 / NRRL Y-324) (Yeast).